Consider the following 137-residue polypeptide: Profilin-3 (137 aa).

This sequence belongs to the profilin family. Interacts with ACTRT3. As to expression, testis specific.

The protein localises to the cytoplasm. It localises to the cytoskeleton. Its subcellular location is the nucleus. Functionally, binds to actin and affects the structure of the cytoskeleton. Slightly reduces actin polymerization. Binds to poly-L-proline, phosphatidylinositol 3-phosphate (PtdIns(3)P), phosphatidylinositol 4,5-bisphosphate (PtdIns(4,5)P2) and phosphatidylinositol 4-phosphate (PtdIns(4)P). May be involved in spermatogenesis. In Homo sapiens (Human), this protein is Profilin-3 (PFN3).